Reading from the N-terminus, the 185-residue chain is Ribosome-recycling factor (185 aa).

It belongs to the RRF family.

Its subcellular location is the cytoplasm. In terms of biological role, responsible for the release of ribosomes from messenger RNA at the termination of protein biosynthesis. May increase the efficiency of translation by recycling ribosomes from one round of translation to another. The chain is Ribosome-recycling factor from Xylella fastidiosa (strain Temecula1 / ATCC 700964).